Reading from the N-terminus, the 605-residue chain is MCGIVGIVGHQPVSERLVEALEPLEYRGYDSAGVATMDAGTLQRRRAEGKLGNLREKLKEAPLSGTIGIAHTRWATHGAPTERNAHPHFTEGVAVVHNGIIENFAELKDELAAGGAEFQTETDTEVVAHLLAKYRRDGLGRREAMHAMLKRVKGAYALAVLFEDDPSTIMAARTGPLAIGHGNGEMFLGSDAIALAPFTNEITYLIDGDWAVIGKTGVHIFDFDGNVVERPRQISTAAAFLVDKGNHRHFMEKEIYEQPEVIAIALGHYVNVIDKSCRSDSDAIDFAGVESLAISCCGTAYLAGLIGKYWFERYARLPVEIAVASEFRYREIPLSPQSALFISQSGETADTLASLRYCKAHGLRIGAVVNARESTMARESDAVFPILAGPEIGVARTKAFTCQLAVLAALRAGAGKARGTISGDEEQALIKSLAEMPAIMGQVLNSIQPEIEVLSRELSNCRDVLYLGRGTSFPLAMEGALKLKEISYIQPKSYAAGQLKHGPYALIDENMPVIVIAPHDRFFDKTVTNMQEVARGGRIILITDEKGAAASKLDTMHTIVLPEVDEIIAPMIFSLPLQLLAYHTAVFMGTDVDQPRNLAKSVTVE.

Cys2 serves as the catalytic Nucleophile; for GATase activity. The 215-residue stretch at Cys2–Thr216 folds into the Glutamine amidotransferase type-2 domain. 2 consecutive SIS domains span residues Asp280 to Thr420 and Leu454 to Pro595. Lys600 functions as the For Fru-6P isomerization activity in the catalytic mechanism.

It is found in the cytoplasm. The enzyme catalyses D-fructose 6-phosphate + L-glutamine = D-glucosamine 6-phosphate + L-glutamate. Involved in the production of the root hair deformation (HAD) factor specifically on medicago. This chain is Glutamine--fructose-6-phosphate aminotransferase [isomerizing] (nodM), found in Rhizobium meliloti (Ensifer meliloti).